The primary structure comprises 299 residues: Very long chain fatty acid elongase 5 (299 aa).

Residue Met1 is modified to N-acetylmethionine. The next 7 membrane-spanning stretches (helical) occupy residues 26-46 (WFLLDNYIPTFVCSVIYLLIV), 64-84 (ILQLYNLGLTLLSLYMFYELV), 112-132 (VLWWYYFSKLIEFMDTFFFIL), 139-158 (ITVLHVYHHATMLNIWWFVM), 168-187 (FGATLNSFIHVLMYSYYGLS), 205-225 (GQLVQFVLTIIQTTCGVFWPC), and 227-247 (FPLGWLFFQIGYMISLIALFT). Residues 274-299 (VAAVNGHTNSFPSLENSVKPRKQRKD) form a disordered region. Polar residues predominate over residues 279-289 (GHTNSFPSLEN).

This sequence belongs to the ELO family. ELOVL5 subfamily. As to quaternary structure, interacts with TECR.

It localises to the endoplasmic reticulum membrane. It is found in the cell projection. Its subcellular location is the dendrite. The enzyme catalyses a very-long-chain acyl-CoA + malonyl-CoA + H(+) = a very-long-chain 3-oxoacyl-CoA + CO2 + CoA. The catalysed reaction is (6Z,9Z,12Z)-octadecatrienoyl-CoA + malonyl-CoA + H(+) = (8Z,11Z,14Z)-3-oxoeicosatrienoyl-CoA + CO2 + CoA. It catalyses the reaction (9Z,12Z,15Z)-octadecatrienoyl-CoA + malonyl-CoA + H(+) = (11Z,14Z,17Z)-3-oxoeicosatrienoyl-CoA + CO2 + CoA. It carries out the reaction (9Z)-hexadecenoyl-CoA + malonyl-CoA + H(+) = 3-oxo-(11Z)-octadecenoyl-CoA + CO2 + CoA. The enzyme catalyses (9Z)-octadecenoyl-CoA + malonyl-CoA + H(+) = 3-oxo-(11Z)-eicosenoyl-CoA + CO2 + CoA. The catalysed reaction is (11Z)-octadecenoyl-CoA + malonyl-CoA + H(+) = 3-oxo-(13Z)-eicosenoyl-CoA + CO2 + CoA. It catalyses the reaction (9Z,12Z)-octadecadienoyl-CoA + malonyl-CoA + H(+) = (11Z,14Z)-3-oxoicosa-11,14-dienoyl-CoA + CO2 + CoA. It carries out the reaction (6Z,9Z,12Z,15Z)-octadecatetraenoyl-CoA + malonyl-CoA + H(+) = (8Z,11Z,14Z,17Z)-3-oxoicosatetraenoyl-CoA + CO2 + CoA. The enzyme catalyses (5Z,8Z,11Z,14Z)-eicosatetraenoyl-CoA + malonyl-CoA + H(+) = (7Z,10Z,13Z,16Z)-3-oxodocosatetraenoyl-CoA + CO2 + CoA. The catalysed reaction is (5Z,8Z,11Z,14Z,17Z)-eicosapentaenoyl-CoA + malonyl-CoA + H(+) = 3-oxo-(7Z,10Z,13Z,16Z,19Z)-docosapentaenoyl-CoA + CO2 + CoA. It participates in lipid metabolism; polyunsaturated fatty acid biosynthesis. Its function is as follows. Catalyzes the first and rate-limiting reaction of the four reactions that constitute the long-chain fatty acids elongation cycle. This endoplasmic reticulum-bound enzymatic process allows the addition of 2 carbons to the chain of long- and very long-chain fatty acids (VLCFAs) per cycle. Condensing enzyme that acts specifically toward polyunsaturated acyl-CoA with the higher activity toward C18:3(n-6) acyl-CoA. May participate in the production of monounsaturated and of polyunsaturated VLCFAs of different chain lengths that are involved in multiple biological processes as precursors of membrane lipids and lipid mediators. In conditions where the essential linoleic and alpha linoleic fatty acids are lacking it is also involved in the synthesis of Mead acid from oleic acid. The polypeptide is Very long chain fatty acid elongase 5 (Mus musculus (Mouse)).